Reading from the N-terminus, the 249-residue chain is 2,3-bisphosphoglycerate-dependent phosphoglycerate mutase (249 aa).

Substrate is bound by residues 10-17 (RHGESEWN), 23-24 (TG), arginine 62, 89-92 (ERHY), lysine 100, 116-117 (RR), and 185-186 (GN). Histidine 11 acts as the Tele-phosphohistidine intermediate in catalysis. The active-site Proton donor/acceptor is the glutamate 89.

It belongs to the phosphoglycerate mutase family. BPG-dependent PGAM subfamily. As to quaternary structure, homodimer.

It catalyses the reaction (2R)-2-phosphoglycerate = (2R)-3-phosphoglycerate. The protein operates within carbohydrate degradation; glycolysis; pyruvate from D-glyceraldehyde 3-phosphate: step 3/5. Catalyzes the interconversion of 2-phosphoglycerate and 3-phosphoglycerate. This Hamiltonella defensa subsp. Acyrthosiphon pisum (strain 5AT) protein is 2,3-bisphosphoglycerate-dependent phosphoglycerate mutase.